Reading from the N-terminus, the 431-residue chain is Adenylosuccinate synthetase (431 aa).

GTP-binding positions include 13-19 (GDEGKGK) and 41-43 (GHT). Aspartate 14 serves as the catalytic Proton acceptor. 2 residues coordinate Mg(2+): aspartate 14 and glycine 41. IMP contacts are provided by residues 14 to 17 (DEGK), 39 to 42 (NAGH), threonine 130, arginine 144, glutamine 225, threonine 240, and arginine 304. The Proton donor role is filled by histidine 42. 300-306 (ATTGRKR) contacts substrate. Residues arginine 306, 332 to 334 (KLD), and 415 to 417 (STG) each bind GTP.

This sequence belongs to the adenylosuccinate synthetase family. As to quaternary structure, homodimer. It depends on Mg(2+) as a cofactor.

It localises to the cytoplasm. The catalysed reaction is IMP + L-aspartate + GTP = N(6)-(1,2-dicarboxyethyl)-AMP + GDP + phosphate + 2 H(+). The protein operates within purine metabolism; AMP biosynthesis via de novo pathway; AMP from IMP: step 1/2. Functionally, plays an important role in the de novo pathway of purine nucleotide biosynthesis. Catalyzes the first committed step in the biosynthesis of AMP from IMP. The chain is Adenylosuccinate synthetase from Shewanella denitrificans (strain OS217 / ATCC BAA-1090 / DSM 15013).